A 274-amino-acid polypeptide reads, in one-letter code: Glucosamine-6-phosphate deaminase (274 aa).

Aspartate 71 functions as the Proton acceptor; for enolization step in the catalytic mechanism. Aspartate 140 acts as the For ring-opening step in catalysis. Histidine 142 acts as the Proton acceptor; for ring-opening step in catalysis. The active-site For ring-opening step is glutamate 147.

It belongs to the glucosamine/galactosamine-6-phosphate isomerase family. NagB subfamily.

It carries out the reaction alpha-D-glucosamine 6-phosphate + H2O = beta-D-fructose 6-phosphate + NH4(+). The protein operates within amino-sugar metabolism; N-acetylneuraminate degradation; D-fructose 6-phosphate from N-acetylneuraminate: step 5/5. Functionally, catalyzes the reversible isomerization-deamination of glucosamine 6-phosphate (GlcN6P) to form fructose 6-phosphate (Fru6P) and ammonium ion. The sequence is that of Glucosamine-6-phosphate deaminase from Fusobacterium nucleatum subsp. nucleatum (strain ATCC 25586 / DSM 15643 / BCRC 10681 / CIP 101130 / JCM 8532 / KCTC 2640 / LMG 13131 / VPI 4355).